The primary structure comprises 289 residues: 33 kDa chaperonin (289 aa).

Intrachain disulfides connect C229-C231 and C262-C265.

This sequence belongs to the HSP33 family. Under oxidizing conditions two disulfide bonds are formed involving the reactive cysteines. Under reducing conditions zinc is bound to the reactive cysteines and the protein is inactive.

The protein resides in the cytoplasm. In terms of biological role, redox regulated molecular chaperone. Protects both thermally unfolding and oxidatively damaged proteins from irreversible aggregation. Plays an important role in the bacterial defense system toward oxidative stress. In Pectobacterium atrosepticum (strain SCRI 1043 / ATCC BAA-672) (Erwinia carotovora subsp. atroseptica), this protein is 33 kDa chaperonin.